Consider the following 471-residue polypeptide: Exoglucanase 2 (471 aa).

The first 18 residues, 1–18 (MIVGILTTLATLATLAAS), serve as a signal peptide directing secretion. A propeptide spanning residues 19–24 (VPLEER) is cleaved from the precursor. Gln-25 bears the Pyrrolidone carboxylic acid mark. The 37-residue stretch at 26-62 (ACSSVWGQCGGQNWSGPTCCASGSTCVYSNDYYSQCL) folds into the CBM1 domain. The span at 64-101 (GAASSSSSTRAASTTSRVSPTTSRSSSATPPPGSTTTR) shows a compositional bias: low complexity. The interval 64–108 (GAASSSSSTRAASTTSRVSPTTSRSSSATPPPGSTTTRVPPVGSG) is disordered. The segment at 66–106 (ASSSSSTRAASTTSRVSPTTSRSSSATPPPGSTTTRVPPVG) is linker. The catalytic stretch occupies residues 107 to 471 (SGTATYSGNP…LLTNANPSFL (365 aa)). 2 O-linked (Man...) threonine glycosylation sites follow: Thr-111 and Thr-121. O-linked (Man...) serine glycosylation is found at Ser-130, Ser-133, Ser-134, and Ser-139. O-linked (Man...) threonine glycosylation is present at Thr-146. An intrachain disulfide couples Cys-200 to Cys-259. The active-site Proton donor is Asp-245. Residue Asn-313 is glycosylated (N-linked (GlcNAc) asparagine). N-linked (GlcNAc...) (high mannose) asparagine glycosylation occurs at Asn-334. An intrachain disulfide couples Cys-392 to Cys-439.

It belongs to the glycosyl hydrolase 6 (cellulase B) family. In terms of processing, asn-334 contains mainly a high-mannose-type glycan (Hex(7-9)GlcNAc(2)) in a 3:1 ration with a single GlcNAc. Asn-313 was primarily unglycosylated with a small fraction (18%) bearing a single GlcNAc at this site.

It is found in the secreted. The catalysed reaction is Hydrolysis of (1-&gt;4)-beta-D-glucosidic linkages in cellulose and cellotetraose, releasing cellobiose from the non-reducing ends of the chains.. Its function is as follows. Exocellobiohydrolases (CBH) that catalyzes the hydrolysis of 1,4-beta-D-glucosidic bonds in cellulose to release the disaccharide cellobiose. The degradation of cellulose involves an interplay between different cellulolytic enzymes. Hydrolysis starts with endoglucanases (EGs), which cut internal beta-1,4-glucosidic bonds in cellulose to reduce the polymerization degree of the substrate and create new chain ends for exocellobiohydrolases (CBHs). The CBHs release the disaccharide cellobiose from the non-reducing end of the cellulose polymer chain. Finally, beta-1,4-glucosidases hydrolyze the cellobiose and other short cello-oligosaccharides into glucose units. This chain is Exoglucanase 2 (cbh2), found in Hypocrea jecorina (Trichoderma reesei).